The sequence spans 741 residues: MAASVPEPRLLLLLLLLLPPLPPVTSASDRPRGANPVNPDKLLVITVATAETEGYRRFLQSAEFFNYTVRTLGLGQEWRGGDVARTVGGGQKVRWLKKEMEKYASQEDMIIMFVDSYDVILASSPTELLKKFVQSGSHLLFSAESFCWPDWGLAEQYPEVGVGKRFLNSGGFIGFAPTIHRIVRQWKYKDDDDDQLFYTQLYLDPGLREKLKLSLDHKSRIFQNLNGALDEVVLKFDQNRVRIRNVAYDTLPVVVHGNGPTKLQLNYLGNYVPNGWTPQGGCGFCNLNRRTLPGGQPPPRVLLAVFVEQPTPFLPRFLQRLLLLDYPPDRISLFLHNNEVYHEPHIADAWPQLQDHFSAVKLVGPEEALSSGEARDMAMDSCRQNPECEFYFSLDADAVLTNPETLRILIEQNRKVIAPMLSRHGKLWSNFWGALSPDEYYARSEDYVELVQRKRVGLWNVPYISQAYVIRGETLRTELPEKEVFSSSDTDPDMAFCRSVRDKGIFLHLSNQHEFGRLLSTSHYDTDHLHPDLWQIFDNPVDWREQYIHENYSRALDGEGLVEQPCPDVYWFPLLTEQMCDELVEEMEHYGQWSGGRHEDSRLAGGYENVPTVDIHMKQVGYEDQWLQLLRTYVGPMTEHLFPGYHTKTRAVMNFVVRYRPDEQPSLRPHHDSSTFTLNVALNHKGVDYEGGGCRFLRYDCRVSSPRKGWALLHPGRLTHYHEGLPTTRGTRYIMVSFVDP.

The first 27 residues, 1–27 (MAASVPEPRLLLLLLLLLPPLPPVTSA), serve as a signal peptide directing secretion. The required for glycosyltransferase activity stretch occupies residues 28–293 (SDRPRGANPV…FCNLNRRTLP (266 aa)). Position 47–49 (47–49 (VAT)) interacts with UDP. A glycan (N-linked (GlcNAc...) asparagine) is linked at Asn-66. Mn(2+)-binding residues include Asp-115, Asp-118, and His-256. 115–117 (DSY) contributes to the UDP binding site. 259 to 262 (GPTK) is a UDP binding site. 2 disulfide bridges follow: Cys-282–Cys-285 and Cys-382–Cys-388. The interval 298-523 (PPRVLLAVFV…EFGRLLSTSH (226 aa)) is accessory region. The N-linked (GlcNAc...) asparagine glycan is linked to Asn-551. Cys-566 and Cys-701 are joined by a disulfide. Positions 602 and 659 each coordinate 2-oxoglutarate. Positions 650–741 (RAVMNFVVRY…RYIMVSFVDP (92 aa)) constitute a Fe2OG dioxygenase domain. His-670 and Asp-672 together coordinate Fe cation. Residues 675 to 718 (TFTLNVALNHKGVDYEGGGCRFLRYDCRVSSPRKGWALLHPGRL) are important for dimerization. Asn-679 lines the 2-oxoglutarate pocket. Position 722 (His-722) interacts with Fe cation. A 2-oxoglutarate-binding site is contributed by Arg-732.

In terms of assembly, homodimer. Requires Fe(2+) as cofactor. It depends on L-ascorbate as a cofactor. Mn(2+) serves as cofactor. As to expression, detected in heart and bone.

Its subcellular location is the rough endoplasmic reticulum. The protein localises to the endoplasmic reticulum lumen. The protein resides in the endoplasmic reticulum membrane. It localises to the secreted. It is found in the extracellular space. The catalysed reaction is L-lysyl-[collagen] + 2-oxoglutarate + O2 = (5R)-5-hydroxy-L-lysyl-[collagen] + succinate + CO2. The enzyme catalyses (5R)-5-hydroxy-L-lysyl-[collagen] + UDP-alpha-D-galactose = (5R)-5-O-(beta-D-galactosyl)-5-hydroxy-L-lysyl-[collagen] + UDP + H(+). It carries out the reaction (5R)-5-O-(beta-D-galactosyl)-5-hydroxy-L-lysyl-[collagen] + UDP-alpha-D-glucose = (5R)-5-O-[alpha-D-glucosyl-(1-&gt;2)-beta-D-galactosyl]-5-hydroxy-L-lysyl-[collagen] + UDP + H(+). Its function is as follows. Multifunctional enzyme that catalyzes a series of post-translational modifications on Lys residues in procollagen. Plays a redundant role in catalyzing the formation of hydroxylysine residues in -Xaa-Lys-Gly- sequences in collagens. Plays a redundant role in catalyzing the transfer of galactose onto hydroxylysine groups, giving rise to galactosyl 5-hydroxylysine. Has an essential role by catalyzing the subsequent transfer of glucose moieties, giving rise to 1,2-glucosylgalactosyl-5-hydroxylysine residues. Catalyzes hydroxylation and glycosylation of Lys residues in the MBL1 collagen-like domain, giving rise to hydroxylysine and 1,2-glucosylgalactosyl-5-hydroxylysine residues. Catalyzes hydroxylation and glycosylation of Lys residues in the ADIPOQ collagen-like domain, giving rise to hydroxylysine and 1,2-glucosylgalactosyl-5-hydroxylysine residues. Essential for normal biosynthesis and secretion of type IV collagens. Essential for normal formation of basement membranes. The sequence is that of Multifunctional procollagen lysine hydroxylase and glycosyltransferase LH3 (Plod3) from Rattus norvegicus (Rat).